The sequence spans 525 residues: 2,3-bisphosphoglycerate-independent phosphoglycerate mutase (525 aa).

Residues Asp-18 and Ser-68 each contribute to the Mn(2+) site. The active-site Phosphoserine intermediate is the Ser-68. Residues His-129, 159 to 160 (RD), Arg-194, Arg-200, 269 to 272 (RADR), and Lys-345 contribute to the substrate site. The Mn(2+) site is built by Asp-413, His-417, Asp-454, His-455, and His-473.

The protein belongs to the BPG-independent phosphoglycerate mutase family. In terms of assembly, monomer. The cofactor is Mn(2+).

The catalysed reaction is (2R)-2-phosphoglycerate = (2R)-3-phosphoglycerate. It functions in the pathway carbohydrate degradation; glycolysis; pyruvate from D-glyceraldehyde 3-phosphate: step 3/5. In terms of biological role, catalyzes the interconversion of 2-phosphoglycerate and 3-phosphoglycerate. The chain is 2,3-bisphosphoglycerate-independent phosphoglycerate mutase from Chromohalobacter salexigens (strain ATCC BAA-138 / DSM 3043 / CIP 106854 / NCIMB 13768 / 1H11).